The following is a 104-amino-acid chain: NADH-quinone oxidoreductase subunit K (104 aa).

Transmembrane regions (helical) follow at residues 4–24, 28–48, and 64–84; these read VAYY…AFLI, IITI…SFVA, and IFVF…LAII.

Belongs to the complex I subunit 4L family. NDH-1 is composed of 14 different subunits. Subunits NuoA, H, J, K, L, M, N constitute the membrane sector of the complex.

It is found in the cell inner membrane. It carries out the reaction a quinone + NADH + 5 H(+)(in) = a quinol + NAD(+) + 4 H(+)(out). Its function is as follows. NDH-1 shuttles electrons from NADH, via FMN and iron-sulfur (Fe-S) centers, to quinones in the respiratory chain. The immediate electron acceptor for the enzyme in this species is believed to be ubiquinone. Couples the redox reaction to proton translocation (for every two electrons transferred, four hydrogen ions are translocated across the cytoplasmic membrane), and thus conserves the redox energy in a proton gradient. The sequence is that of NADH-quinone oxidoreductase subunit K from Acidobacterium capsulatum (strain ATCC 51196 / DSM 11244 / BCRC 80197 / JCM 7670 / NBRC 15755 / NCIMB 13165 / 161).